A 136-amino-acid polypeptide reads, in one-letter code: Nanos homolog 2 (136 aa).

The interval 27-51 (KQRQEGEVAEEPNSRPQEKSEQDLE) is disordered. Basic and acidic residues predominate over residues 28-48 (QRQEGEVAEEPNSRPQEKSEQ). Residues 60-114 (ICNFCKHNGESRHVYTSHQLKTPEGVVVCPILRHYVCPLCGATGDQAHTLKYCPL) form a Nanos-type zinc finger. Residues Cys-61, Cys-64, His-77, Cys-88, Cys-96, Cys-99, His-107, and Cys-112 each coordinate Zn(2+). 2 consecutive short sequence motifs (C2HC) follow at residues 61 to 88 (CNFC…VVVC) and 96 to 112 (CPLC…LKYC).

This sequence belongs to the nanos family. Interacts with CNOT1, CNOT3, CNOT6L, CNOT7 and CNOT9. In terms of tissue distribution, predominantly expressed in male germ cells. Expressed in self-renewing spermatogonial stem cells and developing gonads.

The protein localises to the cytoplasm. It localises to the P-body. Its subcellular location is the perinuclear region. Its function is as follows. Plays a key role in the sexual differentiation of germ cells by promoting the male fate but suppressing the female fate. Represses the female fate pathways by suppressing meiosis, which in turn results in the promotion of the male fate. Maintains the suppression of meiosis by preventing STRA8 expression, which is required for premeiotic DNA replication, after CYP26B1 is decreased. Regulates the localization of the CCR4-NOT deadenylation complex to P-bodies and plays a role in recruiting the complex to trigger the degradation of mRNAs involved in meiosis. Required for the maintenance of the spermatogonial stem cell population. Not essential for the assembly of P-bodies but is required for the maintenance of their normal state. This is Nanos homolog 2 (Nanos2) from Mus musculus (Mouse).